The sequence spans 57 residues: U13-myrmicitoxin-Mri1a (57 aa).

Positions 1–23 (MKIIHVLLLVAVVAITMSPSIMA) are cleaved as a signal peptide. The propeptide occupies 24-29 (ESVAEA). Glutamate 56 bears the Glutamic acid 1-amide mark.

As to expression, expressed by the venom gland.

The protein localises to the secreted. In terms of biological role, induces paralysis 1 hour after injection into insects (blowfly L.caesar) but does not appear to be lethal. The sequence is that of U13-myrmicitoxin-Mri1a from Manica rubida (European giant red ant).